Consider the following 403-residue polypeptide: S-adenosylmethionine synthase (403 aa).

Histidine 16 provides a ligand contact to ATP. Mg(2+) is bound at residue aspartate 18. Residue glutamate 44 coordinates K(+). Glutamate 57 and glutamine 100 together coordinate L-methionine. The interval 100-110 (QSPDIAQGVDR) is flexible loop. Positions 106-126 (QGVDRSYESRSGSASTDAHDL) are disordered. ATP contacts are provided by residues 176 to 178 (DGK), 248 to 249 (KF), aspartate 257, 263 to 264 (RK), alanine 280, and lysine 284. Aspartate 257 lines the L-methionine pocket. An L-methionine-binding site is contributed by lysine 288.

It belongs to the AdoMet synthase family. In terms of assembly, homotetramer; dimer of dimers. The cofactor is Mg(2+). K(+) serves as cofactor.

The protein resides in the cytoplasm. The catalysed reaction is L-methionine + ATP + H2O = S-adenosyl-L-methionine + phosphate + diphosphate. It participates in amino-acid biosynthesis; S-adenosyl-L-methionine biosynthesis; S-adenosyl-L-methionine from L-methionine: step 1/1. Functionally, catalyzes the formation of S-adenosylmethionine (AdoMet) from methionine and ATP. The overall synthetic reaction is composed of two sequential steps, AdoMet formation and the subsequent tripolyphosphate hydrolysis which occurs prior to release of AdoMet from the enzyme. This chain is S-adenosylmethionine synthase, found in Clavibacter sepedonicus (Clavibacter michiganensis subsp. sepedonicus).